The following is a 232-amino-acid chain: RNA chaperone ProQ (232 aa).

The tract at residues 105–182 is disordered; it reads EAKARVQAQR…REEQHTPVSD (78 aa). The segment covering 117 to 136 has biased composition (basic and acidic residues); sequence QQAKKREAAAAAGEKEDAPR. The segment covering 137–146 has biased composition (basic residues); it reads RERKPRPTTP. Positions 147–177 are enriched in basic and acidic residues; that stretch reads RRKEGAERKPRAQKSVEKAPKTVKAPREEQH.

It belongs to the ProQ family.

It localises to the cytoplasm. RNA chaperone with significant RNA binding, RNA strand exchange and RNA duplexing activities. May regulate ProP activity through an RNA-based, post-transcriptional mechanism. The chain is RNA chaperone ProQ from Escherichia coli O7:K1 (strain IAI39 / ExPEC).